The primary structure comprises 671 residues: Oviduct-specific glycoprotein (671 aa).

Positions 1-21 (MGRLLLWVGLVLLMKPNDGTA) are cleaved as a signal peptide. The GH18 domain maps to 22 to 385 (YKLVCYFTNW…HILNELLVRA (364 aa)). Cysteine 26 and cysteine 51 are joined by a disulfide. Chitin contacts are provided by residues 71–72 (LQ), 98–101 (GGWN), tyrosine 142, 211–214 (LSYD), and tryptophan 355. Asparagine 402 carries N-linked (GlcNAc...) asparagine glycosylation. Repeat copies occupy residues 490–504 (TGMT…AGRE), 505–519 (TMTT…PGGE), 520–534 (TMTT…PGGE), 535–549 (TVTT…PGGE), 550–564 (TMTT…PGGE), 565–579 (TVTI…PVGE), 580–594 (TVTI…PGGQ), and 595–609 (TTAT…PPGM). The segment at 490–609 (TGMTVTVQTQ…GSQSVTPPGM (120 aa)) is 8 X 15 AA tandem repeats. Asparagine 511, asparagine 526, asparagine 541, asparagine 556, asparagine 571, and asparagine 586 each carry an N-linked (GlcNAc...) asparagine glycan.

Belongs to the glycosyl hydrolase 18 family. In terms of processing, highly O-glycosylated and also N-glycosylated. In terms of tissue distribution, oviduct.

The protein resides in the cytoplasmic vesicle. It localises to the secretory vesicle. Functionally, binds to oocyte zona pellucida in vivo. May play a role in the fertilization process and/or early embryonic development. Might act as a protective secretion influencing the first steps of the reproductive process necessary for the normal triggering of fertilization and early embryonic development. The protein is Oviduct-specific glycoprotein (OVGP1) of Mesocricetus auratus (Golden hamster).